Consider the following 527-residue polypeptide: N-acetylglutamate synthase, mitochondrial (527 aa).

The transit peptide at 1–18 (MATAWVATALRSAAAARR) directs the protein to the mitochondrion. Residues 14-91 (AAARRLRSPG…PLESPAPPAG (78 aa)) form a disordered region. Positions 19-369 (LRSPGGPGGS…CGTLFKNAER (351 aa)) are amino-acid kinase domain (AAK). Basic and acidic residues predominate over residues 54–63 (AHAEDAEGAK). Over residues 77 to 89 (TPLPTPLESPAPP) the composition is skewed to pro residues. In terms of domain architecture, N-acetyltransferase spans 368-519 (ERMLRVRNLD…HAKGLPDSFC (152 aa)). Substrate is bound by residues Lys394, Lys437, and 467–472 (RSRVTN).

Belongs to the acetyltransferase family. As to quaternary structure, homodimer. Homotetramer. Probably processed by mitochondrial processing peptidase (MPP). The long form has not yet been isolated. In terms of tissue distribution, highly expressed in the liver and small intestine. Weakly expressed in the kidney, spleen and testis.

The protein localises to the mitochondrion matrix. It carries out the reaction L-glutamate + acetyl-CoA = N-acetyl-L-glutamate + CoA + H(+). It participates in amino-acid biosynthesis; L-arginine biosynthesis; N(2)-acetyl-L-ornithine from L-glutamate: step 1/4. With respect to regulation, increased by L-arginine. Plays a role in the regulation of ureagenesis by producing the essential cofactor N-acetylglutamate (NAG), thus modulating carbamoylphosphate synthase I (CPS1) activity. This chain is N-acetylglutamate synthase, mitochondrial (Nags), found in Mus musculus (Mouse).